Consider the following 484-residue polypeptide: Cobyric acid synthase (484 aa).

A GATase cobBQ-type domain is found at 248–435 (VLKVIVPVLP…LHGLFEGSQS (188 aa)). The active-site Nucleophile is Cys-329. His-427 is an active-site residue.

This sequence belongs to the CobB/CobQ family. CobQ subfamily.

It participates in cofactor biosynthesis; adenosylcobalamin biosynthesis. Catalyzes amidations at positions B, D, E, and G on adenosylcobyrinic A,C-diamide. NH(2) groups are provided by glutamine, and one molecule of ATP is hydrogenolyzed for each amidation. This chain is Cobyric acid synthase, found in Pseudomonas putida (strain ATCC 700007 / DSM 6899 / JCM 31910 / BCRC 17059 / LMG 24140 / F1).